A 282-amino-acid chain; its full sequence is Phosphatidylglycerol--prolipoprotein diacylglyceryl transferase (282 aa).

4 helical membrane-spanning segments follow: residues 19–39 (IGPI…LIGV), 59–79 (LSIW…VLFQ), 90–110 (IIAI…GTLA), and 120–140 (VPFW…QAIG). Residue arginine 141 coordinates a 1,2-diacyl-sn-glycero-3-phospho-(1'-sn-glycerol). The next 3 helical transmembrane spans lie at 181–201 (TFLY…TLFF), 212–232 (VGTL…WIEG), and 245–265 (IAQV…AWLY).

Belongs to the Lgt family.

It localises to the cell inner membrane. It catalyses the reaction L-cysteinyl-[prolipoprotein] + a 1,2-diacyl-sn-glycero-3-phospho-(1'-sn-glycerol) = an S-1,2-diacyl-sn-glyceryl-L-cysteinyl-[prolipoprotein] + sn-glycerol 1-phosphate + H(+). The protein operates within protein modification; lipoprotein biosynthesis (diacylglyceryl transfer). Catalyzes the transfer of the diacylglyceryl group from phosphatidylglycerol to the sulfhydryl group of the N-terminal cysteine of a prolipoprotein, the first step in the formation of mature lipoproteins. This is Phosphatidylglycerol--prolipoprotein diacylglyceryl transferase from Trichormus variabilis (strain ATCC 29413 / PCC 7937) (Anabaena variabilis).